We begin with the raw amino-acid sequence, 416 residues long: D-amino acid dehydrogenase 2 (416 aa).

Residue 3 to 17 (ITVLGAGVVGTAAAY) coordinates FAD.

It belongs to the DadA oxidoreductase family. It depends on FAD as a cofactor.

It carries out the reaction a D-alpha-amino acid + A + H2O = a 2-oxocarboxylate + AH2 + NH4(+). Functionally, oxidative deamination of D-amino acids. This chain is D-amino acid dehydrogenase 2 (dadA2), found in Mesorhizobium japonicum (strain LMG 29417 / CECT 9101 / MAFF 303099) (Mesorhizobium loti (strain MAFF 303099)).